We begin with the raw amino-acid sequence, 404 residues long: 1-deoxy-D-xylulose 5-phosphate reductoisomerase (404 aa).

Positions 5, 6, 7, 8, 31, 32, 33, and 121 each coordinate NADPH. Position 122 (lysine 122) interacts with 1-deoxy-D-xylulose 5-phosphate. Glutamate 123 is an NADPH binding site. A Mn(2+)-binding site is contributed by aspartate 147. 1-deoxy-D-xylulose 5-phosphate-binding residues include serine 148, glutamate 149, serine 185, and histidine 208. A Mn(2+)-binding site is contributed by glutamate 149. Glycine 214 lines the NADPH pocket. Positions 221, 226, 227, and 230 each coordinate 1-deoxy-D-xylulose 5-phosphate. Glutamate 230 lines the Mn(2+) pocket.

Belongs to the DXR family. The cofactor is Mg(2+). It depends on Mn(2+) as a cofactor.

The enzyme catalyses 2-C-methyl-D-erythritol 4-phosphate + NADP(+) = 1-deoxy-D-xylulose 5-phosphate + NADPH + H(+). It functions in the pathway isoprenoid biosynthesis; isopentenyl diphosphate biosynthesis via DXP pathway; isopentenyl diphosphate from 1-deoxy-D-xylulose 5-phosphate: step 1/6. Functionally, catalyzes the NADPH-dependent rearrangement and reduction of 1-deoxy-D-xylulose-5-phosphate (DXP) to 2-C-methyl-D-erythritol 4-phosphate (MEP). The protein is 1-deoxy-D-xylulose 5-phosphate reductoisomerase of Prochlorococcus marinus subsp. pastoris (strain CCMP1986 / NIES-2087 / MED4).